Consider the following 513-residue polypeptide: V-type proton ATPase subunit B, kidney isoform (513 aa).

An ATP-binding site is contributed by Arg394. Positions 510–513 (DTAL) match the PDZ-binding motif.

This sequence belongs to the ATPase alpha/beta chains family. V-ATPase is a heteromultimeric enzyme made up of two complexes: the ATP-hydrolytic V1 complex and the proton translocation V0 complex. The V1 complex consists of three catalytic AB heterodimers that form a heterohexamer, three peripheral stalks each consisting of EG heterodimers, one central rotor including subunits D and F, and the regulatory subunits C and H. The proton translocation complex V0 consists of the proton transport subunit a, a ring of proteolipid subunits c9c'', rotary subunit d, subunits e and f, and the accessory subunits ATP6AP1/Ac45 and ATP6AP2/PRR. Forms a complex with NHERF1 and SCL4A7. As to expression, kidney cortex and medulla.

Its subcellular location is the apical cell membrane. The protein resides in the basolateral cell membrane. Its function is as follows. Non-catalytic subunit of the V1 complex of vacuolar(H+)-ATPase (V-ATPase), a multisubunit enzyme composed of a peripheral complex (V1) that hydrolyzes ATP and a membrane integral complex (V0) that translocates protons. V-ATPase is responsible for acidifying and maintaining the pH of intracellular compartments and in some cell types, is targeted to the plasma membrane, where it is responsible for acidifying the extracellular environment. Essential for the proper assembly and activity of V-ATPase. In renal intercalated cells, mediates secretion of protons (H+) into the urine thereby ensuring correct urinary acidification. Required for optimal olfactory function by mediating the acidification of the nasal olfactory epithelium. This is V-type proton ATPase subunit B, kidney isoform (ATP6V1B1) from Bos taurus (Bovine).